The following is a 149-amino-acid chain: SsrA-binding protein (149 aa).

The protein belongs to the SmpB family.

It localises to the cytoplasm. In terms of biological role, required for rescue of stalled ribosomes mediated by trans-translation. Binds to transfer-messenger RNA (tmRNA), required for stable association of tmRNA with ribosomes. tmRNA and SmpB together mimic tRNA shape, replacing the anticodon stem-loop with SmpB. tmRNA is encoded by the ssrA gene; the 2 termini fold to resemble tRNA(Ala) and it encodes a 'tag peptide', a short internal open reading frame. During trans-translation Ala-aminoacylated tmRNA acts like a tRNA, entering the A-site of stalled ribosomes, displacing the stalled mRNA. The ribosome then switches to translate the ORF on the tmRNA; the nascent peptide is terminated with the 'tag peptide' encoded by the tmRNA and targeted for degradation. The ribosome is freed to recommence translation, which seems to be the essential function of trans-translation. In Thermosipho africanus (strain TCF52B), this protein is SsrA-binding protein.